A 261-amino-acid polypeptide reads, in one-letter code: Segregation and condensation protein A (261 aa).

It belongs to the ScpA family. Component of a cohesin-like complex composed of ScpA, ScpB and the Smc homodimer, in which ScpA and ScpB bind to the head domain of Smc. The presence of the three proteins is required for the association of the complex with DNA.

It localises to the cytoplasm. In terms of biological role, participates in chromosomal partition during cell division. May act via the formation of a condensin-like complex containing Smc and ScpB that pull DNA away from mid-cell into both cell halves. This chain is Segregation and condensation protein A, found in Ligilactobacillus salivarius (strain UCC118) (Lactobacillus salivarius).